The sequence spans 93 residues: Cell division topological specificity factor (93 aa).

Belongs to the MinE family.

Functionally, prevents the cell division inhibition by proteins MinC and MinD at internal division sites while permitting inhibition at polar sites. This ensures cell division at the proper site by restricting the formation of a division septum at the midpoint of the long axis of the cell. The sequence is that of Cell division topological specificity factor from Synechococcus sp. (strain WH7803).